Here is a 618-residue protein sequence, read N- to C-terminus: MPIQVLPPQLANQIAAGEVVERPASVVKELVENSLDAGATRVDIDIERGGAKLIRIRDNGCGIKKEELALALARHATSKIASLDDLEAIISLGFRGEALASISSVSRLTLTSRTAEQAEAWQAYAEGRDMDVTVKPAAHPVGTTLEVLDLFYNTPARRKFMRTEKTEFNHIDEIIRRIALARFDVTLNLSHNGKLVRQYRAVAKDGQKERRLGAICGTPFLEQALAIEWQHGDLTLRGWVADPNHTTTALTEIQYCYVNGRMMRDRLINHAIRQACEDKLGADQQPAFVLYLEIDPHQVDVNVHPAKHEVRFHQSRLVHDFIYQGVLSVLQQQTETTLPLEEIAPAPRHVPENRIAAGRNHFAVPAEPTTAREPATPRYSGGASGGNGGRQTAGGWPHAQPGYQKQQGEVYRALLQTPTTSPAPEAVAPALDGHSQSFGRVLTIVCGDCALLEHAGTIQLLSLPVAERWLRQAQLTPGQSPVCAQPLLIPLRLKVSADEKAALQKAQSLLGELGIEFQSDAQHVTIRAVPLPLRQQNLQILIPELIGYLAQQTTFATVNIAQWIARNVQSEHPQWSMAQAISLLADVERLCPQLVKAPPGGLLQPVDLHSAMNALKHE.

The interval 367–402 (EPTTAREPATPRYSGGASGGNGGRQTAGGWPHAQPG) is disordered. The segment covering 382-392 (GASGGNGGRQT) has biased composition (gly residues).

It belongs to the DNA mismatch repair MutL/HexB family.

This protein is involved in the repair of mismatches in DNA. It is required for dam-dependent methyl-directed DNA mismatch repair. May act as a 'molecular matchmaker', a protein that promotes the formation of a stable complex between two or more DNA-binding proteins in an ATP-dependent manner without itself being part of a final effector complex. The sequence is that of DNA mismatch repair protein MutL from Salmonella paratyphi A (strain ATCC 9150 / SARB42).